The chain runs to 297 residues: Lipoyl synthase (297 aa).

7 residues coordinate [4Fe-4S] cluster: Cys37, Cys42, Cys48, Cys63, Cys67, Cys70, and Ser276. One can recognise a Radical SAM core domain in the interval 49 to 265; sequence WSRKHATVMI…ERIAKTKGFL (217 aa).

The protein belongs to the radical SAM superfamily. Lipoyl synthase family. The cofactor is [4Fe-4S] cluster.

It is found in the cytoplasm. It carries out the reaction [[Fe-S] cluster scaffold protein carrying a second [4Fe-4S](2+) cluster] + N(6)-octanoyl-L-lysyl-[protein] + 2 oxidized [2Fe-2S]-[ferredoxin] + 2 S-adenosyl-L-methionine + 4 H(+) = [[Fe-S] cluster scaffold protein] + N(6)-[(R)-dihydrolipoyl]-L-lysyl-[protein] + 4 Fe(3+) + 2 hydrogen sulfide + 2 5'-deoxyadenosine + 2 L-methionine + 2 reduced [2Fe-2S]-[ferredoxin]. The protein operates within protein modification; protein lipoylation via endogenous pathway; protein N(6)-(lipoyl)lysine from octanoyl-[acyl-carrier-protein]: step 2/2. In terms of biological role, catalyzes the radical-mediated insertion of two sulfur atoms into the C-6 and C-8 positions of the octanoyl moiety bound to the lipoyl domains of lipoate-dependent enzymes, thereby converting the octanoylated domains into lipoylated derivatives. In Rickettsia typhi (strain ATCC VR-144 / Wilmington), this protein is Lipoyl synthase.